Here is a 235-residue protein sequence, read N- to C-terminus: Large ribosomal subunit protein uL1 (235 aa).

The protein belongs to the universal ribosomal protein uL1 family. As to quaternary structure, part of the 50S ribosomal subunit.

In terms of biological role, binds directly to 23S rRNA. The L1 stalk is quite mobile in the ribosome, and is involved in E site tRNA release. Functionally, protein L1 is also a translational repressor protein, it controls the translation of the L11 operon by binding to its mRNA. The protein is Large ribosomal subunit protein uL1 of Prochlorococcus marinus (strain MIT 9215).